A 79-amino-acid polypeptide reads, in one-letter code: Succinate dehydrogenase assembly factor 1, mitochondrial (79 aa).

It belongs to the complex I LYR family. SDHAF1 subfamily. Interacts with sdh2 within an sdh1-sdh2 subcomplex.

It localises to the mitochondrion matrix. Its function is as follows. Plays an essential role in the assembly of succinate dehydrogenase (SDH), an enzyme complex (also referred to as respiratory complex II) that is a component of both the tricarboxylic acid (TCA) cycle and the mitochondrial electron transport chain, and which couples the oxidation of succinate to fumarate with the reduction of ubiquinone (coenzyme Q) to ubiquinol. Promotes maturation of the iron-sulfur protein subunit sdh2 of the SDH catalytic dimer, protecting it from the deleterious effects of oxidants. May act together with SDHAF3. In Schizosaccharomyces pombe (strain 972 / ATCC 24843) (Fission yeast), this protein is Succinate dehydrogenase assembly factor 1, mitochondrial.